Consider the following 218-residue polypeptide: Glutathione S-transferase A (218 aa).

Ser-1 is modified (N-acetylserine). Residues 2–82 (GKPVLHYFNV…YIATKYNLYG (81 aa)) form the GST N-terminal domain. Lys-3 carries the N6-succinyllysine modification. Glutathione-binding positions include Tyr-8, Lys-44, 53–54 (QV), and 66–67 (QS). The 123-residue stretch at 84 to 206 (DTKERLLIDM…LQPGSQRKPF (123 aa)) folds into the GST C-terminal domain.

Belongs to the GST superfamily. Alpha family. In terms of assembly, homodimer or heterodimer of GSTA1 and GSTA2.

Its subcellular location is the cytoplasm. The catalysed reaction is RX + glutathione = an S-substituted glutathione + a halide anion + H(+). It catalyses the reaction prostaglandin A2 + glutathione = prostaglandin A2-S-(R)-glutathione. It carries out the reaction prostaglandin J2 + glutathione = prostaglandin J2-S-(R)-glutathione. The enzyme catalyses (13S)-hydroperoxy-(9Z,11E)-octadecadienoate + 2 glutathione = (13S)-hydroxy-(9Z,11E)-octadecadienoate + glutathione disulfide + H2O. The catalysed reaction is androst-5-ene-3,17-dione = androst-4-ene-3,17-dione. In terms of biological role, glutathione S-transferase that catalyzes the nucleophilic attack of the sulfur atom of glutathione on the electrophilic groups of a wide range of exogenous and endogenous compounds. Involved in the formation of glutathione conjugates of both prostaglandin A2 (PGA2) and prostaglandin J2 (PGJ2). It also catalyzes the isomerization of D5-androstene-3,17-dione (AD) into D4-androstene-3,17-dione and may therefore play an important role in hormone biosynthesis. Through its glutathione-dependent peroxidase activity toward the fatty acid hydroperoxide (13S)-hydroperoxy-(9Z,11E)-octadecadienoate/13-HPODE it is also involved in the metabolism of oxidized linoleic acid. The sequence is that of Glutathione S-transferase A from Cavia porcellus (Guinea pig).